The chain runs to 187 residues: UPF0398 protein SH1465 (187 aa).

This sequence belongs to the UPF0398 family.

In Staphylococcus haemolyticus (strain JCSC1435), this protein is UPF0398 protein SH1465.